We begin with the raw amino-acid sequence, 342 residues long: MINAGIVGGTGYTGVELLRILVQHPKVKLKVITSRQEAGTGVDELFSSLRGQIALKFSDPAKVDFSKCDVVFFATPNGIAMQQAKALLDSGIKVIDLAADFRIKDVAEWEKWYGMTHAAPELVAEAVYGLPEVNREKIRDARLIANPGCYPTAVQLGFIPLIEAGAVDADHLIADTKSGVSGAGRKAEIHTLYAEASDNFKSYAVPGHRHLPEIRQGLSERSNGPIGLTFVPHLTPMIRGIHATLYARLTRDVDLQTLYENRYANEPFVDVLPAGSHPETRSVRGSNFCRIAVHRPGNGDTAVILSVTDNLVKGAAGQAVQNMNIMYGLPETTGIRHVPLLP.

The active site involves Cys-149.

The protein belongs to the NAGSA dehydrogenase family. Type 1 subfamily.

It is found in the cytoplasm. It carries out the reaction N-acetyl-L-glutamate 5-semialdehyde + phosphate + NADP(+) = N-acetyl-L-glutamyl 5-phosphate + NADPH + H(+). It participates in amino-acid biosynthesis; L-arginine biosynthesis; N(2)-acetyl-L-ornithine from L-glutamate: step 3/4. In terms of biological role, catalyzes the NADPH-dependent reduction of N-acetyl-5-glutamyl phosphate to yield N-acetyl-L-glutamate 5-semialdehyde. The protein is N-acetyl-gamma-glutamyl-phosphate reductase of Nitrosomonas europaea (strain ATCC 19718 / CIP 103999 / KCTC 2705 / NBRC 14298).